The chain runs to 1251 residues: Centrosomal protein of 162 kDa (1251 aa).

Composition is skewed to basic and acidic residues over residues 1–19 (MLEK…KEEG) and 144–159 (ESEK…KCES). 3 disordered regions span residues 1–33 (MLEK…KEIL), 144–183 (ESEK…QEPN), and 442–473 (LHKK…SIPA). The span at 160 to 169 (YSEDFEEDTD) shows a compositional bias: acidic residues. The segment covering 457 to 470 (SSGYGKSTSYSKQS) has biased composition (low complexity). Coiled-coil stretches lie at residues 559-782 (EREL…VQIT), 813-1165 (YAEN…SQAT), and 1210-1242 (KVAE…QEAL). Residues 1078 to 1100 (SDNNLRNKTDNKENRQESLKNNT) are disordered. Positions 1082-1095 (LRNKTDNKENRQES) are enriched in basic and acidic residues.

The protein belongs to the CEP162 family. As to expression, expressed in retina and brain (at protein level).

It localises to the cytoplasm. Its subcellular location is the cytoskeleton. It is found in the microtubule organizing center. The protein resides in the centrosome. The protein localises to the centriole. It localises to the nucleus. In terms of biological role, required to promote assembly of the transition zone in primary cilia. Acts by specifically recognizing and binding the axonemal microtubule. Plays a role in cell proliferation and differentiation in the neuroretina. Has an ATPase activity in vitro. In Coturnix coturnix (Common quail), this protein is Centrosomal protein of 162 kDa (CEP162).